Consider the following 791-residue polypeptide: Diacylglycerol kinase gamma (791 aa).

Disordered stretches follow at residues 82-103 and 117-154; these read KPRH…ANSA and DEAC…SSSS. Over residues 83 to 92 the composition is skewed to basic and acidic residues; the sequence is PRHETSDHPT. Residues 94–103 show a composition bias toward polar residues; sequence GASNSEANSA. 2 consecutive EF-hand domains span residues 175 to 210 and 220 to 255; these read RPQD…MLHI and ELRP…TIPL. Residues Asp188, Asp190, Asn192, Glu199, Asp233, Asp235, Asp237, and Glu244 each coordinate Ca(2+). 2 consecutive Phorbol-ester/DAG-type zinc fingers follow at residues 271–321 and 336–385; these read RHAW…IPGC and QHAW…LCDG. The DAGKc domain occupies 430 to 564; sequence PGTHPLLVLV…LDRWHLEVIP (135 aa). The disordered stretch occupies residues 768-791; sequence APMMMGPPQKSSFFSLRRKSRSKD.

It belongs to the eukaryotic diacylglycerol kinase family. In terms of tissue distribution, predominantly expressed in retina and in a much lesser extent in the brain. Other tissues contain extremely low levels of DGK-gamma.

Its subcellular location is the membrane. It is found in the cytoplasm. The protein localises to the cytosol. It localises to the cytoskeleton. The catalysed reaction is a 1,2-diacyl-sn-glycerol + ATP = a 1,2-diacyl-sn-glycero-3-phosphate + ADP + H(+). It catalyses the reaction 1,2-didecanoyl-sn-glycerol + ATP = 1,2-didecanoyl-sn-glycero-3-phosphate + ADP + H(+). The enzyme catalyses 1-octadecanoyl-2-(5Z,8Z,11Z,14Z-eicosatetraenoyl)-sn-glycerol + ATP = 1-octadecanoyl-2-(5Z,8Z,11Z,14Z-eicosatetraenoyl)-sn-glycero-3-phosphate + ADP + H(+). It carries out the reaction 1,2-di-(9Z-octadecenoyl)-sn-glycerol + ATP = 1,2-di-(9Z-octadecenoyl)-sn-glycero-3-phosphate + ADP + H(+). The catalysed reaction is 1-octadecanoyl-2-(9Z,12Z)-octadecadienoyl-sn-glycerol + ATP = 1-octadecanoyl-2-(9Z,12Z-octadecadienoyl)-sn-glycero-3-phosphate + ADP + H(+). It participates in lipid metabolism; glycerolipid metabolism. Its activity is regulated as follows. The activity is calcium-dependent. Requires phosphatidylserine for maximal activity. Functionally, diacylglycerol kinase that converts diacylglycerol/DAG into phosphatidic acid/phosphatidate/PA and regulates the respective levels of these two bioactive lipids. Thereby, acts as a central switch between the signaling pathways activated by these second messengers with different cellular targets and opposite effects in numerous biological processes. Has no apparent specificity with regard to the acyl compositions of diacylglycerol. Specifically expressed in the cerebellum where it controls the level of diacylglycerol which in turn regulates the activity of protein kinase C gamma. Through protein kinase C gamma, indirectly regulates the dendritic development of Purkinje cells, cerebellar long term depression and ultimately cerebellar motor coordination. The polypeptide is Diacylglycerol kinase gamma (DGKG) (Homo sapiens (Human)).